Here is a 34-residue protein sequence, read N- to C-terminus: MAFNIHNRNLLSLEHHTNRELRYLLDLTRDLKAK.

This sequence belongs to the aspartate/ornithine carbamoyltransferase superfamily. OTCase family. As to quaternary structure, probably nonameric or dodecameric.

It is found in the cytoplasm. It catalyses the reaction carbamoyl phosphate + L-ornithine = L-citrulline + phosphate + H(+). Its pathway is amino-acid degradation; L-arginine degradation via ADI pathway; carbamoyl phosphate from L-arginine: step 2/2. This is Ornithine carbamoyltransferase, catabolic (arcB) from Pseudomonas putida (Arthrobacter siderocapsulatus).